The chain runs to 278 residues: tRNA (guanine-N(7)-)-methyltransferase (278 aa).

Residues G63, 86–87 (EL), 119–120 (NA), and L139 each bind S-adenosyl-L-methionine. D142 is an active-site residue. S-adenosyl-L-methionine is bound at residue 217 to 219 (TEE). The interval 259-278 (IDSTTTTTTSTATITEVESK) is disordered. Low complexity predominate over residues 261 to 278 (STTTTTTSTATITEVESK).

Belongs to the class I-like SAM-binding methyltransferase superfamily. TrmB family.

It is found in the nucleus. It carries out the reaction guanosine(46) in tRNA + S-adenosyl-L-methionine = N(7)-methylguanosine(46) in tRNA + S-adenosyl-L-homocysteine. Its pathway is tRNA modification; N(7)-methylguanine-tRNA biosynthesis. Functionally, catalyzes the formation of N(7)-methylguanine at position 46 (m7G46) in tRNA. The chain is tRNA (guanine-N(7)-)-methyltransferase (mettl1) from Dictyostelium discoideum (Social amoeba).